The sequence spans 264 residues: Undecaprenyl-diphosphatase (264 aa).

8 helical membrane passes run 15–37, 42–62, 84–104, 108–128, 143–163, 182–202, 217–237, and 243–263; these read GLTE…LLGF, AASF…VLYW, YLLF…HDFI, LFNP…ILIV, VTPK…WPGF, IAAE…TGYD, FLAV…KGFI, and LTLR…LFFW.

This sequence belongs to the UppP family.

Its subcellular location is the cell inner membrane. It carries out the reaction di-trans,octa-cis-undecaprenyl diphosphate + H2O = di-trans,octa-cis-undecaprenyl phosphate + phosphate + H(+). Functionally, catalyzes the dephosphorylation of undecaprenyl diphosphate (UPP). Confers resistance to bacitracin. The chain is Undecaprenyl-diphosphatase from Maridesulfovibrio salexigens (strain ATCC 14822 / DSM 2638 / NCIMB 8403 / VKM B-1763) (Desulfovibrio salexigens).